Here is a 273-residue protein sequence, read N- to C-terminus: Transposable element Tcb2 transposase (273 aa).

Belongs to the transposase 5 family.

The protein resides in the nucleus. Functionally, probably essential for transposable element Tcb2 transposition. The chain is Transposable element Tcb2 transposase from Caenorhabditis briggsae.